We begin with the raw amino-acid sequence, 180 residues long: Inosine/xanthosine triphosphatase (180 aa).

8 to 13 (TTNPAK) is a binding site for substrate. Asp-38 is a binding site for Mg(2+).

Belongs to the YjjX NTPase family. As to quaternary structure, homodimer. The cofactor is Mg(2+). Mn(2+) serves as cofactor.

It catalyses the reaction XTP + H2O = XDP + phosphate + H(+). The catalysed reaction is ITP + H2O = IDP + phosphate + H(+). Phosphatase that hydrolyzes non-canonical purine nucleotides such as XTP and ITP to their respective diphosphate derivatives. Probably excludes non-canonical purines from DNA/RNA precursor pool, thus preventing their incorporation into DNA/RNA and avoiding chromosomal lesions. This is Inosine/xanthosine triphosphatase from Yersinia pseudotuberculosis serotype O:1b (strain IP 31758).